Reading from the N-terminus, the 261-residue chain is MSLKKSPFFELRSGSVDTLLFTVKTTDLDALRTELVKRFEATPEFFADDVVAIDVRRLADGERVALADIRQMLNDVRMRPVGVVALATQGWAGEAGLPLLEARDRRAPAAKPADEAEPAAVLAVEAAAAPAAAAAPEQSSDPVPTLLQAGGQTLVIDRPLRSGQQIYAKGDLVVLAPVSHGAEIIAEGNIHIYAPLRGRALAGVHGNHDARIFCTCLEPELISIAGIYRTTENPLPADVLGKSVQIRLEEEKLMIEPLRLT.

The protein belongs to the MinC family. In terms of assembly, interacts with MinD and FtsZ.

Its function is as follows. Cell division inhibitor that blocks the formation of polar Z ring septums. Rapidly oscillates between the poles of the cell to destabilize FtsZ filaments that have formed before they mature into polar Z rings. Prevents FtsZ polymerization. In Burkholderia cenocepacia (strain ATCC BAA-245 / DSM 16553 / LMG 16656 / NCTC 13227 / J2315 / CF5610) (Burkholderia cepacia (strain J2315)), this protein is Probable septum site-determining protein MinC.